Here is a 217-residue protein sequence, read N- to C-terminus: ATP phosphoribosyltransferase (217 aa).

It belongs to the ATP phosphoribosyltransferase family. Short subfamily. Heteromultimer composed of HisG and HisZ subunits.

It is found in the cytoplasm. The catalysed reaction is 1-(5-phospho-beta-D-ribosyl)-ATP + diphosphate = 5-phospho-alpha-D-ribose 1-diphosphate + ATP. The protein operates within amino-acid biosynthesis; L-histidine biosynthesis; L-histidine from 5-phospho-alpha-D-ribose 1-diphosphate: step 1/9. In terms of biological role, catalyzes the condensation of ATP and 5-phosphoribose 1-diphosphate to form N'-(5'-phosphoribosyl)-ATP (PR-ATP). Has a crucial role in the pathway because the rate of histidine biosynthesis seems to be controlled primarily by regulation of HisG enzymatic activity. In Syntrophomonas wolfei subsp. wolfei (strain DSM 2245B / Goettingen), this protein is ATP phosphoribosyltransferase.